We begin with the raw amino-acid sequence, 96 residues long: Mapk-regulated corepressor-interacting protein 1 (96 aa).

Disordered stretches follow at residues M1–I28 and A76–S96. Residues P79–S83 carry the PXDLS motif motif. Residues D81–S96 show a composition bias toward basic and acidic residues.

Belongs to the MCRIP family.

Its subcellular location is the nucleus. It is found in the cytoplasm. It localises to the stress granule. May play a role in the regulation of the epithelial-mesenchymal transition. This chain is Mapk-regulated corepressor-interacting protein 1 (MCRIP1), found in Gallus gallus (Chicken).